Consider the following 204-residue polypeptide: MRYPNLLFLALPISEHYIEESLKYFKLTSNDPMILSGFRGPRVSHLTIGMIPVKNDEDVLKCMDFLYNKEDEIRKSYGEKKITIDLKGTSFFGKSPQEAKVLYATPVDKHNEWLKVIFTEHNLFTKDARPLTLHCTLLNSRYIKYQGRRIRFFNSEPFMEKYGQFLWAHNIELDKLSIMKTGAVGEPGNMYYEELASIPLLVND.

It localises to the cytoplasm. The protein localises to the nucleus. This is an uncharacterized protein from Schizosaccharomyces pombe (strain 972 / ATCC 24843) (Fission yeast).